Reading from the N-terminus, the 308-residue chain is Transaldolase (308 aa).

The active-site Schiff-base intermediate with substrate is Lys125.

Belongs to the transaldolase family. Type 1 subfamily. Homodimer.

The protein localises to the cytoplasm. It carries out the reaction D-sedoheptulose 7-phosphate + D-glyceraldehyde 3-phosphate = D-erythrose 4-phosphate + beta-D-fructose 6-phosphate. Its pathway is carbohydrate degradation; pentose phosphate pathway; D-glyceraldehyde 3-phosphate and beta-D-fructose 6-phosphate from D-ribose 5-phosphate and D-xylulose 5-phosphate (non-oxidative stage): step 2/3. In terms of biological role, transaldolase is important for the balance of metabolites in the pentose-phosphate pathway. This is Transaldolase from Pseudomonas putida (strain W619).